Reading from the N-terminus, the 943-residue chain is Isoleucine--tRNA ligase (943 aa).

The 'HIGH' region motif lies at 58 to 68 (PYANGNIHIGH). E567 provides a ligand contact to L-isoleucyl-5'-AMP. The short motif at 608–612 (KMSKS) is the 'KMSKS' region element. K611 is an ATP binding site. Positions 906, 909, 926, and 929 each coordinate Zn(2+).

This sequence belongs to the class-I aminoacyl-tRNA synthetase family. IleS type 1 subfamily. In terms of assembly, monomer. It depends on Zn(2+) as a cofactor.

The protein localises to the cytoplasm. It catalyses the reaction tRNA(Ile) + L-isoleucine + ATP = L-isoleucyl-tRNA(Ile) + AMP + diphosphate. Functionally, catalyzes the attachment of isoleucine to tRNA(Ile). As IleRS can inadvertently accommodate and process structurally similar amino acids such as valine, to avoid such errors it has two additional distinct tRNA(Ile)-dependent editing activities. One activity is designated as 'pretransfer' editing and involves the hydrolysis of activated Val-AMP. The other activity is designated 'posttransfer' editing and involves deacylation of mischarged Val-tRNA(Ile). This Azotobacter vinelandii (strain DJ / ATCC BAA-1303) protein is Isoleucine--tRNA ligase.